The sequence spans 262 residues: Acyl-[acyl-carrier-protein]--UDP-N-acetylglucosamine O-acyltransferase (262 aa).

This sequence belongs to the transferase hexapeptide repeat family. LpxA subfamily. In terms of assembly, homotrimer.

Its subcellular location is the cytoplasm. It catalyses the reaction a (3R)-hydroxyacyl-[ACP] + UDP-N-acetyl-alpha-D-glucosamine = a UDP-3-O-[(3R)-3-hydroxyacyl]-N-acetyl-alpha-D-glucosamine + holo-[ACP]. The protein operates within glycolipid biosynthesis; lipid IV(A) biosynthesis; lipid IV(A) from (3R)-3-hydroxytetradecanoyl-[acyl-carrier-protein] and UDP-N-acetyl-alpha-D-glucosamine: step 1/6. Its function is as follows. Involved in the biosynthesis of lipid A, a phosphorylated glycolipid that anchors the lipopolysaccharide to the outer membrane of the cell. This Burkholderia orbicola (strain MC0-3) protein is Acyl-[acyl-carrier-protein]--UDP-N-acetylglucosamine O-acyltransferase.